Reading from the N-terminus, the 194-residue chain is Surfactant protein C (194 aa).

The disordered stretch occupies residues 1-21 (MDMGSKEVLMESPPDYSTGPR). The propeptide occupies 1 to 23 (MDMGSKEVLMESPPDYSTGPRSQ). Residues C28 and C29 are each lipidated (S-palmitoyl cysteine). The propeptide occupies 59 to 194 (HMSQKHTEMV…LCGELPLYYI (136 aa)). In terms of domain architecture, BRICHOS spans 95–194 (FSIGSTGIVL…LCGELPLYYI (100 aa)). A disulfide bridge connects residues C122 and C186. Positions 149–170 (SSTPTSKLGQEEGHSAGSDSDS) are disordered.

It is found in the secreted. Its subcellular location is the extracellular space. It localises to the surface film. Pulmonary surfactant associated proteins promote alveolar stability by lowering the surface tension at the air-liquid interface in the peripheral air spaces. The sequence is that of Surfactant protein C from Rattus norvegicus (Rat).